Consider the following 101-residue polypeptide: Large ribosomal subunit protein uL23 (101 aa).

It belongs to the universal ribosomal protein uL23 family. In terms of assembly, part of the 50S ribosomal subunit. Contacts protein L29, and trigger factor when it is bound to the ribosome.

Its function is as follows. One of the early assembly proteins it binds 23S rRNA. One of the proteins that surrounds the polypeptide exit tunnel on the outside of the ribosome. Forms the main docking site for trigger factor binding to the ribosome. The sequence is that of Large ribosomal subunit protein uL23 from Azoarcus sp. (strain BH72).